We begin with the raw amino-acid sequence, 247 residues long: Cell division protein ZapD (247 aa).

The protein belongs to the ZapD family. Interacts with FtsZ.

It localises to the cytoplasm. In terms of biological role, cell division factor that enhances FtsZ-ring assembly. Directly interacts with FtsZ and promotes bundling of FtsZ protofilaments, with a reduction in FtsZ GTPase activity. This Enterobacter sp. (strain 638) protein is Cell division protein ZapD.